Consider the following 360-residue polypeptide: NAD(P)H-quinone oxidoreductase subunit 1, chloroplastic (360 aa).

Helical transmembrane passes span 27–47 (VWIF…VLVI), 98–118 (FSIG…VIPF), 129–149 (IGIF…LMSG), 165–185 (AAQS…ISLL), 203–223 (FWGW…ISSL), 253–273 (FGLF…FVTI), 297–317 (VFGT…VLVI), and 340–360 (FLLP…LLSL).

This sequence belongs to the complex I subunit 1 family. NDH is composed of at least 16 different subunits, 5 of which are encoded in the nucleus.

It localises to the plastid. The protein resides in the chloroplast thylakoid membrane. It carries out the reaction a plastoquinone + NADH + (n+1) H(+)(in) = a plastoquinol + NAD(+) + n H(+)(out). The enzyme catalyses a plastoquinone + NADPH + (n+1) H(+)(in) = a plastoquinol + NADP(+) + n H(+)(out). Its function is as follows. NDH shuttles electrons from NAD(P)H:plastoquinone, via FMN and iron-sulfur (Fe-S) centers, to quinones in the photosynthetic chain and possibly in a chloroplast respiratory chain. The immediate electron acceptor for the enzyme in this species is believed to be plastoquinone. Couples the redox reaction to proton translocation, and thus conserves the redox energy in a proton gradient. This is NAD(P)H-quinone oxidoreductase subunit 1, chloroplastic from Draba nemorosa (Woodland whitlowgrass).